We begin with the raw amino-acid sequence, 230 residues long: Large ribosomal subunit protein uL1 (230 aa).

This sequence belongs to the universal ribosomal protein uL1 family. Part of the 50S ribosomal subunit.

Functionally, binds directly to 23S rRNA. The L1 stalk is quite mobile in the ribosome, and is involved in E site tRNA release. Protein L1 is also a translational repressor protein, it controls the translation of the L11 operon by binding to its mRNA. The sequence is that of Large ribosomal subunit protein uL1 from Rhodopseudomonas palustris (strain BisA53).